Reading from the N-terminus, the 365-residue chain is tRNA/tmRNA (uracil-C(5))-methyltransferase (365 aa).

Positions 189, 217, 222, 238, and 298 each coordinate S-adenosyl-L-methionine. Cys323 serves as the catalytic Nucleophile. Residue Glu357 is the Proton acceptor of the active site.

The protein belongs to the class I-like SAM-binding methyltransferase superfamily. RNA M5U methyltransferase family. TrmA subfamily.

The catalysed reaction is uridine(54) in tRNA + S-adenosyl-L-methionine = 5-methyluridine(54) in tRNA + S-adenosyl-L-homocysteine + H(+). It carries out the reaction uridine(341) in tmRNA + S-adenosyl-L-methionine = 5-methyluridine(341) in tmRNA + S-adenosyl-L-homocysteine + H(+). Its function is as follows. Dual-specificity methyltransferase that catalyzes the formation of 5-methyluridine at position 54 (m5U54) in all tRNAs, and that of position 341 (m5U341) in tmRNA (transfer-mRNA). This Shewanella sp. (strain MR-4) protein is tRNA/tmRNA (uracil-C(5))-methyltransferase.